A 262-amino-acid polypeptide reads, in one-letter code: CD99 antigen-like protein 2 (262 aa).

Residues 1–25 (MVAWRSAFLVCLAFSLATLVQRGSG) form the signal peptide. Residues 26–185 (DFDDFNLEDA…PGSGMVAEPG (160 aa)) lie on the Extracellular side of the membrane. The disordered stretch occupies residues 38–181 (ETSSVKQPWD…SNDDPGSGMV (144 aa)). 2 stretches are compositionally biased toward low complexity: residues 49–60 (TTTTTTNRPGTT) and 98–119 (VTTTTKRPVTTRAPANTLGNDF). Composition is skewed to basic and acidic residues over residues 125–136 (LDDRNDRDDGRR) and 159–168 (YKPDKGKGDG). Ser-178 is a glycosylation site (O-linked (Xyl...) (chondroitin sulfate) serine). Residues 186 to 206 (TIAGVASALAMALIGAVSSYI) form a helical membrane-spanning segment. Residues 207-262 (SYQQKKFCFSIQQGLNADYVKGENLEAVVCEEPQVKYSTLHTQSAEPPPPPEPARI) lie on the Cytoplasmic side of the membrane.

The protein belongs to the CD99 family. Post-translationally, O-glycosylated. Detected in cerebrospinal fluid (at protein level). Expressed in many tissues, with low expression in thymus.

The protein resides in the cell membrane. It is found in the cell junction. Its subcellular location is the secreted. In terms of biological role, plays a role in a late step of leukocyte extravasation helping cells to overcome the endothelial basement membrane. Acts at the same site as, but independently of, PECAM1. Homophilic adhesion molecule, but these interactions may not be required for cell aggregation. The chain is CD99 antigen-like protein 2 (CD99L2) from Homo sapiens (Human).